The sequence spans 255 residues: Glutamate racemase (255 aa).

Substrate contacts are provided by residues 7–8 (DS) and 39–40 (YG). Cysteine 70 functions as the Proton donor/acceptor in the catalytic mechanism. 71–72 (NT) is a binding site for substrate. Cysteine 181 serves as the catalytic Proton donor/acceptor. Residue 182-183 (TH) participates in substrate binding.

It belongs to the aspartate/glutamate racemases family.

The catalysed reaction is L-glutamate = D-glutamate. The protein operates within cell wall biogenesis; peptidoglycan biosynthesis. Its function is as follows. Provides the (R)-glutamate required for cell wall biosynthesis. This chain is Glutamate racemase, found in Helicobacter pylori (strain Shi470).